The chain runs to 379 residues: Cytochrome b (379 aa).

4 helical membrane passes run 33-53, 77-98, 113-133, and 178-198; these read FGSLLGMCLVLQIFTGLFLAM, WLIRYMHANGASLFFICLYIHI, WNIGILLLFLTMATAFVGYVL, and FFAFHFILPFIIAALATVHLL. Positions 83 and 97 each coordinate heme b. 2 residues coordinate heme b: His182 and His196. His201 is a binding site for a ubiquinone. A run of 4 helical transmembrane segments spans residues 226–246, 288–308, 320–340, and 347–367; these read TKDFLGALIXIMFFMTLVLYF, LGGVVALILSILVLALLPYIH, ISQFLFWTLVSDLLLLTWIGG, and FIIIGQTASXMYFTIILIXMX.

It belongs to the cytochrome b family. The cytochrome bc1 complex contains 11 subunits: 3 respiratory subunits (MT-CYB, CYC1 and UQCRFS1), 2 core proteins (UQCRC1 and UQCRC2) and 6 low-molecular weight proteins (UQCRH/QCR6, UQCRB/QCR7, UQCRQ/QCR8, UQCR10/QCR9, UQCR11/QCR10 and a cleavage product of UQCRFS1). This cytochrome bc1 complex then forms a dimer. Heme b is required as a cofactor.

The protein localises to the mitochondrion inner membrane. Component of the ubiquinol-cytochrome c reductase complex (complex III or cytochrome b-c1 complex) that is part of the mitochondrial respiratory chain. The b-c1 complex mediates electron transfer from ubiquinol to cytochrome c. Contributes to the generation of a proton gradient across the mitochondrial membrane that is then used for ATP synthesis. This Thomomys umbrinus (Southern pocket gopher) protein is Cytochrome b (MT-CYB).